The primary structure comprises 496 residues: Beta-amylase (496 aa).

At Ala2 the chain carries N-acetylalanine. Residues Asp54, His94, and Asp102 each coordinate substrate. Residue Glu187 is the Proton donor of the active site. The substrate site is built by Lys296, His301, and Thr343. Glu381 functions as the Proton acceptor in the catalytic mechanism. Substrate-binding positions include 382–383 and Arg421; that span reads NA.

It belongs to the glycosyl hydrolase 14 family. Monomer.

It catalyses the reaction Hydrolysis of (1-&gt;4)-alpha-D-glucosidic linkages in polysaccharides so as to remove successive maltose units from the non-reducing ends of the chains.. The chain is Beta-amylase (BMY1) from Glycine max (Soybean).